Here is a 332-residue protein sequence, read N- to C-terminus: Anthranilate phosphoribosyltransferase (332 aa).

Residues Gly-78, 81–82 (GD), Ser-86, 88–91 (NIST), 106–114 (KHGNKSITS), and Ser-118 contribute to the 5-phospho-alpha-D-ribose 1-diphosphate site. Gly-78 serves as a coordination point for anthranilate. Residue Ser-90 participates in Mg(2+) binding. Position 109 (Asn-109) interacts with anthranilate. Arg-163 provides a ligand contact to anthranilate. Asp-222 and Glu-223 together coordinate Mg(2+).

It belongs to the anthranilate phosphoribosyltransferase family. As to quaternary structure, homodimer. Requires Mg(2+) as cofactor.

It carries out the reaction N-(5-phospho-beta-D-ribosyl)anthranilate + diphosphate = 5-phospho-alpha-D-ribose 1-diphosphate + anthranilate. It participates in amino-acid biosynthesis; L-tryptophan biosynthesis; L-tryptophan from chorismate: step 2/5. Functionally, catalyzes the transfer of the phosphoribosyl group of 5-phosphorylribose-1-pyrophosphate (PRPP) to anthranilate to yield N-(5'-phosphoribosyl)-anthranilate (PRA). This Staphylococcus aureus (strain Mu3 / ATCC 700698) protein is Anthranilate phosphoribosyltransferase.